The sequence spans 471 residues: Cytochrome P450 monooxygenase afvE (471 aa).

A helical transmembrane segment spans residues 265 to 285 (IIFYHFELSTPVAFFIIFAVY). Cys-410 contributes to the heme binding site.

It belongs to the cytochrome P450 family. Requires heme as cofactor.

Its subcellular location is the membrane. It participates in secondary metabolite biosynthesis. Functionally, cytochrome P450 monooxygenase; part of the gene cluster that mediates the biosynthesis of aflavarin, a bicoumarin that exhibits anti-insectan activity against the fungivorous beetle C.hemipterus. In Aspergillus flavus (strain ATCC 200026 / FGSC A1120 / IAM 13836 / NRRL 3357 / JCM 12722 / SRRC 167), this protein is Cytochrome P450 monooxygenase afvE.